A 734-amino-acid chain; its full sequence is Photosystem I P700 chlorophyll a apoprotein A2 (734 aa).

Transmembrane regions (helical) follow at residues 46–69, 135–158, 175–199, 273–291, 330–353, 369–395, 417–439, and 517–535; these read IFASHFGQLAIIFLWTSGNLFHVA, LYTGALFLLFLSALSLIGGWLHLQ, LNHHLSGLFGVSSLAWTGHLVHVAI, MAHHHLAIAILFLIAGHMY, IHFQLGLALASLGVITSLVAQHMY, AALYTHHQYIAGFIMTGAFAHGAIFFI, AIISHLSWASLFLGFHTLGLYVH, and FLVHHAIALGLHTTTLILV. [4Fe-4S] cluster is bound by residues Cys-559 and Cys-568. 2 helical membrane passes run 575 to 596 and 643 to 665; these read AFYLAVFWMLNTIGWVTFYWHW and LSVWAWMFLFGHLVWATGFMFLI. 3 residues coordinate chlorophyll a: His-654, Met-662, and Tyr-670. Trp-671 lines the phylloquinone pocket. The chain crosses the membrane as a helical span at residues 707–727; the sequence is LVGLAHFSVGYIFTYAAFLIA.

Belongs to the PsaA/PsaB family. The PsaA/B heterodimer binds the P700 chlorophyll special pair and subsequent electron acceptors. PSI consists of a core antenna complex that captures photons, and an electron transfer chain that converts photonic excitation into a charge separation. The eukaryotic PSI reaction center is composed of at least 11 subunits. Requires P700 is a chlorophyll a/chlorophyll a' dimer, A0 is one or more chlorophyll a, A1 is one or both phylloquinones and FX is a shared 4Fe-4S iron-sulfur center. as cofactor.

It is found in the plastid. It localises to the chloroplast thylakoid membrane. It catalyses the reaction reduced [plastocyanin] + hnu + oxidized [2Fe-2S]-[ferredoxin] = oxidized [plastocyanin] + reduced [2Fe-2S]-[ferredoxin]. Functionally, psaA and PsaB bind P700, the primary electron donor of photosystem I (PSI), as well as the electron acceptors A0, A1 and FX. PSI is a plastocyanin-ferredoxin oxidoreductase, converting photonic excitation into a charge separation, which transfers an electron from the donor P700 chlorophyll pair to the spectroscopically characterized acceptors A0, A1, FX, FA and FB in turn. Oxidized P700 is reduced on the lumenal side of the thylakoid membrane by plastocyanin. This Arabis hirsuta (Hairy rock-cress) protein is Photosystem I P700 chlorophyll a apoprotein A2.